A 351-amino-acid polypeptide reads, in one-letter code: 3-dehydroquinate synthase (351 aa).

NAD(+) is bound by residues 60–65 (DGEEYK), 94–98 (GVISD), 118–119 (TT), Lys131, Lys140, and 158–161 (FLKT). Zn(2+) contacts are provided by Glu173, His239, and His256.

This sequence belongs to the sugar phosphate cyclases superfamily. Dehydroquinate synthase family. The cofactor is NAD(+). Co(2+) is required as a cofactor. Zn(2+) serves as cofactor.

The protein resides in the cytoplasm. The catalysed reaction is 7-phospho-2-dehydro-3-deoxy-D-arabino-heptonate = 3-dehydroquinate + phosphate. It functions in the pathway metabolic intermediate biosynthesis; chorismate biosynthesis; chorismate from D-erythrose 4-phosphate and phosphoenolpyruvate: step 2/7. In terms of biological role, catalyzes the conversion of 3-deoxy-D-arabino-heptulosonate 7-phosphate (DAHP) to dehydroquinate (DHQ). This is 3-dehydroquinate synthase from Campylobacter jejuni subsp. jejuni serotype O:2 (strain ATCC 700819 / NCTC 11168).